Consider the following 214-residue polypeptide: MADS-box protein CMB2 (214 aa).

Residues 3 to 58 (RGKLEIRKIENKTNRQVTFSKRRNGIMKKAQELTVLCDAKVSLLMISSTHKLHHYL) enclose the MADS-box domain. A K-box domain is found at 84 to 174 (WERMQEQHRK…VMELEAKFRG (91 aa)).

In terms of tissue distribution, in flowers. Not found in vegetative tissues.

It localises to the nucleus. The polypeptide is MADS-box protein CMB2 (CMB2) (Dianthus caryophyllus (Carnation)).